Here is a 325-residue protein sequence, read N- to C-terminus: Ribosomal RNA small subunit methyltransferase H (325 aa).

S-adenosyl-L-methionine contacts are provided by residues 42 to 44, D62, F86, D105, and Q112; that span reads GGH.

It belongs to the methyltransferase superfamily. RsmH family.

It is found in the cytoplasm. It carries out the reaction cytidine(1402) in 16S rRNA + S-adenosyl-L-methionine = N(4)-methylcytidine(1402) in 16S rRNA + S-adenosyl-L-homocysteine + H(+). Functionally, specifically methylates the N4 position of cytidine in position 1402 (C1402) of 16S rRNA. This Cupriavidus metallidurans (strain ATCC 43123 / DSM 2839 / NBRC 102507 / CH34) (Ralstonia metallidurans) protein is Ribosomal RNA small subunit methyltransferase H.